The primary structure comprises 478 residues: MTKKRKLEGEESNEAEEPSQKLKQTPEEEQQLVIKNQDNQGDVEEVEYEEVEEEQEEEVEDDDDEDDGDENEDQTDGNRIEAAATSGSGNQEDDDDEPIQDLLEPFSKEQVLSLLKEAAEKHVDVANRIREVADEDPVHRKIFVHGLGWDTKTETLIEAFKQYGEIEDCKAVFDKISGKSKGYGFILYKSRSGARNALKQPQKKIGSRMTACQLASKGPVFGGAPIAAAAVSAPAQHSNSEHTQKKIYVSNVGAELDPQKLLMFFSKFGEIEEGPLGLDKYTGRPKGFCLFVYKSSESAKRALEEPHKTFEGHILHCQKAIDGPKPGKQQQHHHNPHAYNNPRYQRNDNNGYGPPGGHGHLMAGNPAGMGGPTAQVINPAIGQALTALLASQGAGLAFNPAIGQALLGSLGTAAGVNPGNGVGMPTGYGTQAMAPGTMPGYGTQPGLQGGYQTPQPGQGGTSRGQHGVGPYGTPYMGH.

Residues 1 to 99 form a disordered region; sequence MTKKRKLEGE…NQEDDDDEPI (99 aa). The span at 41–75 shows a compositional bias: acidic residues; the sequence is GDVEEVEYEEVEEEQEEEVEDDDDEDDGDENEDQT. 2 RRM domains span residues 140-217 and 245-328; these read RKIF…LASK and KKIY…KPGK. Disordered regions lie at residues 321 to 359 and 442 to 478; these read IDGPKPGKQQQHHHNPHAYNNPRYQRNDNNGYGPPGGHG and GTQPGLQGGYQTPQPGQGGTSRGQHGVGPYGTPYMGH. Over residues 442–456 the composition is skewed to low complexity; sequence GTQPGLQGGYQTPQP. The span at 457–470 shows a compositional bias: gly residues; that stretch reads GQGGTSRGQHGVGP.

Interacts with UBA1A, UBA2A, UBP1A, UBP1B, UBP1C and SRK2E. In terms of tissue distribution, expressed in young leaves, flowers and embryos.

Its subcellular location is the nucleus. Heterogeneous nuclear ribonucleoprotein (hnRNP)-like protein that acts as a component of a complex regulating the turnover of mRNAs in the nucleus. Binds with high affinity to RNA molecules that contain U-rich sequences in 3'-UTRs. May function in complex with UBP1 and contribute to the stabilization of mRNAs in the nucleus. However, unlike UBP1, UBA2A does not stimulate pre-mRNA splicing. This chain is UBP1-associated protein 2A (UBA2A), found in Arabidopsis thaliana (Mouse-ear cress).